Here is a 345-residue protein sequence, read N- to C-terminus: MSRWSVSQGCGNSHKALRMSGNREQLLSGWGAPGMLRPSMRSEAERQRSFRAWPRSCPQLSPVELARSGFYYLGPGDRVQCFSCGGVLRSWEPGDRPDTEHRKFFPSCPFLQQQQRGPGATDSVDGQVLGQLSGEEPDRTWEPVYPEMSEEQVRLGSFSTWPLDVPGSPEVLAGAGFFYTGHRDHVKCFHCDGGLQNWEQGDDPWTEHAKWFPMCDFLLQVKGEAFIRSVQESLFSSPEPSPESLGSYDYDRSLASSTESVSVPRAPTPGERSEPPKVSGPPLSTEEQLQRLKEERMCKVCMDKDVSMLFVPCGHLVVCTECAPNLRHCPICRAAIRGSVRAFMS.

BIR repeat units lie at residues 46–112 and 154–219; these read RQRS…PFLQ and RLGS…DFLL. Residues Cys188, Cys191, His208, and Cys215 each contribute to the Zn(2+) site. Ser237 carries the phosphoserine modification. Ser241 bears the Phosphoserine; by MAPK1 mark. The residue at position 253 (Ser253) is a Phosphoserine. At Ser257 the chain carries Phosphoserine; by MAPK1. A disordered region spans residues 258–286; sequence TESVSVPRAPTPGERSEPPKVSGPPLSTE. The RING-type zinc finger occupies 298 to 333; it reads CKVCMDKDVSMLFVPCGHLVVCTECAPNLRHCPICR.

It belongs to the IAP family. In terms of processing, auto-ubiquitinated, and degraded in a 2-step mechanism; a caspase-independent first step and a caspase-dependent second step. Phosphorylated via MAPK-dependent and CDK-dependent pathways during oocyte maturation. Phosphorylation does not appear to affect caspase inhibition or autoubiquitination activity.

It is found in the cytoplasm. It carries out the reaction S-ubiquitinyl-[E2 ubiquitin-conjugating enzyme]-L-cysteine + [acceptor protein]-L-lysine = [E2 ubiquitin-conjugating enzyme]-L-cysteine + N(6)-ubiquitinyl-[acceptor protein]-L-lysine.. Weak apoptotic suppressor. Has E3 ubiquitin-protein ligase activity. Weak inhibitor of caspase activity. In Xenopus laevis (African clawed frog), this protein is Baculoviral IAP repeat-containing protein 7-B (birc7-b).